Consider the following 168-residue polypeptide: Photosystem I assembly protein Ycf3 (168 aa).

TPR repeat units lie at residues 35–68 (AFTYYRDGMSAQSEGNYAEALQNYYEATRPEIDP), 72–105 (SYILYNIGLIHTSNGEHTKALEYYFRALERNPFL), and 120–153 (GEQAIRQGDSEIAEAWSDQAAEYWKQAIALTPGN).

It belongs to the Ycf3 family.

The protein resides in the plastid. Its subcellular location is the chloroplast thylakoid membrane. Essential for the assembly of the photosystem I (PSI) complex. May act as a chaperone-like factor to guide the assembly of the PSI subunits. This Acorus calamus var. americanus (American sweet flag) protein is Photosystem I assembly protein Ycf3.